The chain runs to 382 residues: V-type proton ATPase subunit C 1 (382 aa).

T2 carries the N-acetylthreonine modification.

Belongs to the V-ATPase C subunit family. In terms of assembly, V-ATPase is a heteromultimeric enzyme made up of two complexes: the ATP-hydrolytic V1 complex and the proton translocation V0 complex. The V1 complex consists of three catalytic AB heterodimers that form a heterohexamer, three peripheral stalks each consisting of EG heterodimers, one central rotor including subunits D and F, and the regulatory subunits C and H. The proton translocation complex V0 consists of the proton transport subunit a, a ring of proteolipid subunits c9c'', rotary subunit d, subunits e and f, and the accessory subunits ATP6AP1/Ac45 and ATP6AP2/PRR.

It is found in the cytoplasmic vesicle. It localises to the secretory vesicle. The protein resides in the synaptic vesicle membrane. The protein localises to the clathrin-coated vesicle membrane. Functionally, subunit of the V1 complex of vacuolar(H+)-ATPase (V-ATPase), a multisubunit enzyme composed of a peripheral complex (V1) that hydrolyzes ATP and a membrane integral complex (V0) that translocates protons. V-ATPase is responsible for acidifying and maintaining the pH of intracellular compartments and in some cell types, is targeted to the plasma membrane, where it is responsible for acidifying the extracellular environment. Subunit C is necessary for the assembly of the catalytic sector of the enzyme and is likely to have a specific function in its catalytic activity. The polypeptide is V-type proton ATPase subunit C 1 (ATP6V1C1) (Macaca fascicularis (Crab-eating macaque)).